The sequence spans 394 residues: [Pyruvate dehydrogenase (acetyl-transferring)] kinase 1, mitochondrial (394 aa).

The transit peptide at 1–20 (MWKIMRSWKCGGMRWAHRQR) directs the protein to the mitochondrion. A Histidine kinase domain is found at 126–386 (AYPYELHNPP…DVYIKLKGPS (261 aa)). Position 148 is a phosphohistidine; by autocatalysis (histidine 148). ATP-binding positions include 267-274 (EVFKNAFE), aspartate 304, 323-324 (ST), and 347-352 (GMGFGL).

Belongs to the PDK/BCKDK protein kinase family. In terms of assembly, interacts with PKP2.

Its subcellular location is the mitochondrion matrix. The enzyme catalyses L-seryl-[pyruvate dehydrogenase E1 alpha subunit] + ATP = O-phospho-L-seryl-[pyruvate dehydrogenase E1 alpha subunit] + ADP + H(+). Inhibits the mitochondrial pyruvate dehydrogenase complex by phosphorylation of the E1 alpha subunit (PDA1), thus contributing to the regulation of glucose metabolism. Also involved in telomere maintenance. The chain is [Pyruvate dehydrogenase (acetyl-transferring)] kinase 1, mitochondrial from Saccharomyces cerevisiae (strain ATCC 204508 / S288c) (Baker's yeast).